The primary structure comprises 850 residues: Protein translocase subunit SecA (850 aa).

ATP contacts are provided by residues Gln-87, 105 to 109 (GEGKT), and Asp-494. Cys-834, Cys-836, Cys-845, and Cys-846 together coordinate Zn(2+).

It belongs to the SecA family. Monomer and homodimer. Part of the essential Sec protein translocation apparatus which comprises SecA, SecYEG and auxiliary proteins SecDF-YajC and YidC. Zn(2+) is required as a cofactor.

The protein localises to the cell inner membrane. It localises to the cytoplasm. The catalysed reaction is ATP + H2O + cellular proteinSide 1 = ADP + phosphate + cellular proteinSide 2.. In terms of biological role, part of the Sec protein translocase complex. Interacts with the SecYEG preprotein conducting channel. Has a central role in coupling the hydrolysis of ATP to the transfer of proteins into and across the cell membrane, serving as an ATP-driven molecular motor driving the stepwise translocation of polypeptide chains across the membrane. The protein is Protein translocase subunit SecA of Desulfotalea psychrophila (strain LSv54 / DSM 12343).